The sequence spans 203 residues: Small ribosomal subunit protein uS4 (203 aa).

In terms of domain architecture, S4 RNA-binding spans 93–154; the sequence is RRLDNVVFRA…KSRNMDAVTD (62 aa).

This sequence belongs to the universal ribosomal protein uS4 family. As to quaternary structure, part of the 30S ribosomal subunit. Contacts protein S5. The interaction surface between S4 and S5 is involved in control of translational fidelity.

Its function is as follows. One of the primary rRNA binding proteins, it binds directly to 16S rRNA where it nucleates assembly of the body of the 30S subunit. Functionally, with S5 and S12 plays an important role in translational accuracy. This Chlorobium luteolum (strain DSM 273 / BCRC 81028 / 2530) (Pelodictyon luteolum) protein is Small ribosomal subunit protein uS4.